The sequence spans 199 residues: Putative ATP-dependent Clp protease proteolytic subunit-like (199 aa).

This sequence belongs to the peptidase S14 family. Component of the chloroplastic Clp protease core complex.

Its subcellular location is the plastid. The protein resides in the cyanelle. In terms of biological role, has lost the two conserved residues (Ser and His) proposed to be part of the active site. Therefore it could be inactive. This Cyanophora paradoxa protein is Putative ATP-dependent Clp protease proteolytic subunit-like (clpP-B).